Here is a 48-residue protein sequence, read N- to C-terminus: Small polypeptide DEVIL 14 (48 aa).

The chain crosses the membrane as a helical span at residues 4 to 23; sequence TVVLRCCTSVTKVRTWKRCS. The required for DVL/RTFL small polypeptide activity stretch occupies residues 17–48; that stretch reads RTWKRCSKQIKEQRARLYIIWKCAVFLLSSHD.

Belongs to the DVL/RTFL small polypeptides family.

It localises to the cell membrane. Small polypeptide acting as a regulatory molecule which coordinates cellular responses required for differentiation, growth and development, probably by restricting polar cell proliferation in lateral organs and coordinating socket cell recruitment and differentiation at trichome sites. This Arabidopsis thaliana (Mouse-ear cress) protein is Small polypeptide DEVIL 14.